The following is a 158-amino-acid chain: Phosphopantetheine adenylyltransferase (158 aa).

Substrate is bound at residue T9. ATP is bound by residues 9–10 (TF) and H17. 3 residues coordinate substrate: K41, L73, and R87. Residues 88-90 (GLR), E98, and 123-129 (YAYISSS) contribute to the ATP site.

This sequence belongs to the bacterial CoaD family. In terms of assembly, homohexamer. It depends on Mg(2+) as a cofactor.

It localises to the cytoplasm. The catalysed reaction is (R)-4'-phosphopantetheine + ATP + H(+) = 3'-dephospho-CoA + diphosphate. It functions in the pathway cofactor biosynthesis; coenzyme A biosynthesis; CoA from (R)-pantothenate: step 4/5. In terms of biological role, reversibly transfers an adenylyl group from ATP to 4'-phosphopantetheine, yielding dephospho-CoA (dPCoA) and pyrophosphate. This chain is Phosphopantetheine adenylyltransferase, found in Allochromatium vinosum (strain ATCC 17899 / DSM 180 / NBRC 103801 / NCIMB 10441 / D) (Chromatium vinosum).